A 520-amino-acid chain; its full sequence is Calcium and calcium/calmodulin-dependent serine/threonine-protein kinase (520 aa).

The Protein kinase domain maps to 13 to 302 (YEVVDVLGKG…ANDLLKHPWV (290 aa)). Residues 19-27 (LGKGGFSVV) and lysine 44 each bind ATP. The active-site Proton acceptor is aspartate 167. Residues 227–243 (MWSLGVILYILLSGCPP) form a helical membrane-spanning segment. The residue at position 267 (threonine 267) is a Phosphothreonine; by autocatalysis. The calmodulin-binding stretch occupies residues 325–338 (ARRKLRAAAIASVL). Residues 346–368 (TKKLKNLLGSHDMKSEELENLRA) are a coiled coil. EF-hand domains are found at residues 361–395 (EELENLRAHFKRICANGDNATLPEFEEVLKAMKMN), 396–431 (SLIPLAPRVFDLFDNNRDGTIDMREILCGLSNLRNS), 432–467 (QGDDALQLCFQMYDADRSGCISKEELASMLRALPED), and 474–509 (TEPGKLDEIFDQMDANSDGVVTFDEFKAAMQRDSSL). Residues aspartate 409, asparagine 411, aspartate 413, threonine 415, glutamate 420, aspartate 445, aspartate 447, serine 449, cysteine 451, glutamate 456, aspartate 487, asparagine 489, aspartate 491, and glutamate 498 each coordinate Ca(2+).

The protein belongs to the protein kinase superfamily. CAMK Ser/Thr protein kinase family. CaMK subfamily. In terms of processing, autophosphorylation stimulated by calcium and inhibited by calcium/calmodulin. Occurs probably by an intermolecular mechanism.

Its subcellular location is the membrane. The catalysed reaction is L-seryl-[protein] + ATP = O-phospho-L-seryl-[protein] + ADP + H(+). It catalyses the reaction L-threonyl-[protein] + ATP = O-phospho-L-threonyl-[protein] + ADP + H(+). Its activity is regulated as follows. Activated by calcium/calmodulin binding after calcium-induced autophosphorylation. Autophosphorylation is associated with a time-dependent loss of kinase activity sensitive to reaction pH and ATP concentration. In vitro inactivation leads to the formation of network-like structures. In terms of biological role, protein kinase that may be involved in microsporogenesis. The protein is Calcium and calcium/calmodulin-dependent serine/threonine-protein kinase (CCAMK) of Lilium longiflorum (Trumpet lily).